The sequence spans 58 residues: uncharacterized protein (58 aa).

This is an uncharacterized protein from Enterobacteria phage T4 (Bacteriophage T4).